The chain runs to 184 residues: UPF0301 protein SPO0296 (184 aa).

The protein belongs to the UPF0301 (AlgH) family.

The protein is UPF0301 protein SPO0296 of Ruegeria pomeroyi (strain ATCC 700808 / DSM 15171 / DSS-3) (Silicibacter pomeroyi).